We begin with the raw amino-acid sequence, 89 residues long: Small ribosomal subunit protein uS15 (89 aa).

The protein belongs to the universal ribosomal protein uS15 family. In terms of assembly, part of the 30S ribosomal subunit. Forms a bridge to the 50S subunit in the 70S ribosome, contacting the 23S rRNA.

One of the primary rRNA binding proteins, it binds directly to 16S rRNA where it helps nucleate assembly of the platform of the 30S subunit by binding and bridging several RNA helices of the 16S rRNA. In terms of biological role, forms an intersubunit bridge (bridge B4) with the 23S rRNA of the 50S subunit in the ribosome. The sequence is that of Small ribosomal subunit protein uS15 from Serratia proteamaculans (strain 568).